Reading from the N-terminus, the 377-residue chain is 1,3,6,8-tetrahydroxynaphthalene synthase (377 aa).

Residue cysteine 164 is part of the active site.

Belongs to the thiolase-like superfamily. Chalcone/stilbene synthases family. Homodimer.

It catalyses the reaction 5 malonyl-CoA + 5 H(+) = naphthalene-1,3,6,8-tetrol + 5 CO2 + 5 CoA + H2O. It participates in pigment biosynthesis; melanin biosynthesis. Its function is as follows. Involved in the biosynthesis of melanin but also various secondary metabolites containing a naphthoquinone ring. Catalyzes the iterative condensation of five CoA-linked malonyl units to form a pentaketide intermediate. THNS subsequently catalyzes the dual intramolecular Claisen and aldol condensations of this linear intermediate to produce the fused ring of 1,3,6,8-tetrahydroxynaphthalene (THN). This chain is 1,3,6,8-tetrahydroxynaphthalene synthase, found in Streptomyces peucetius subsp. caesius.